The following is a 572-amino-acid chain: Chaperonin CPN60-like 2, mitochondrial (572 aa).

The N-terminal 31 residues, 1–31, are a transit peptide targeting the mitochondrion; the sequence is MYRVLSKLSSSIGSSTSRKLVSGRIISSRNY.

The protein belongs to the chaperonin (HSP60) family.

The protein localises to the mitochondrion. In terms of biological role, implicated in mitochondrial protein import and macromolecular assembly. May facilitate the correct folding of imported proteins. May also prevent misfolding and promote the refolding and proper assembly of unfolded polypeptides generated under stress conditions in the mitochondrial matrix. The protein is Chaperonin CPN60-like 2, mitochondrial of Arabidopsis thaliana (Mouse-ear cress).